The chain runs to 1420 residues: DNA-directed RNA polymerase subunit beta' (1420 aa).

Residues Cys70, Cys72, Cys85, and Cys88 each coordinate Zn(2+). Asp464, Asp466, and Asp468 together coordinate Mg(2+). Zn(2+) is bound by residues Cys823, Cys897, Cys904, and Cys907.

Belongs to the RNA polymerase beta' chain family. As to quaternary structure, the RNAP catalytic core consists of 2 alpha, 1 beta, 1 beta' and 1 omega subunit. When a sigma factor is associated with the core the holoenzyme is formed, which can initiate transcription. Mg(2+) is required as a cofactor. It depends on Zn(2+) as a cofactor.

It carries out the reaction RNA(n) + a ribonucleoside 5'-triphosphate = RNA(n+1) + diphosphate. Its function is as follows. DNA-dependent RNA polymerase catalyzes the transcription of DNA into RNA using the four ribonucleoside triphosphates as substrates. The chain is DNA-directed RNA polymerase subunit beta' from Polynucleobacter asymbioticus (strain DSM 18221 / CIP 109841 / QLW-P1DMWA-1) (Polynucleobacter necessarius subsp. asymbioticus).